The sequence spans 68 residues: Beta-defensin 1 (68 aa).

The first 21 residues, Met1–Gly21, serve as a signal peptide directing secretion. Positions Asp22–Ser32 are excised as a propeptide. 3 disulfide bridges follow: Cys37–Cys66, Cys44–Cys59, and Cys49–Cys67.

This sequence belongs to the beta-defensin family. Monomer. Homodimer.

Its subcellular location is the secreted. It is found in the membrane. In terms of biological role, has bactericidal activity. May act as a ligand for C-C chemokine receptor CCR6. Positively regulates the sperm motility and bactericidal activity in a CCR6-dependent manner. Binds to CCR6 and triggers Ca2+ mobilization in the sperm which is important for its motility. In Macaca mulatta (Rhesus macaque), this protein is Beta-defensin 1 (DEFB1).